We begin with the raw amino-acid sequence, 424 residues long: Tyrosine--tRNA ligase (424 aa).

An L-tyrosine-binding site is contributed by tyrosine 37. The 'HIGH' region signature appears at 42–51; sequence PTADSLHLGH. L-tyrosine-binding residues include tyrosine 175 and glutamine 179. The short motif at 235–239 is the 'KMSKS' region element; that stretch reads KFGKT. Residue lysine 238 participates in ATP binding. Residues 357–414 enclose the S4 RNA-binding domain; that stretch reads ADLQQALVNAELVPSRGQARTMISSNAVAINGEKQSDPEYAFTDADRLFGRYTLLRRG.

Belongs to the class-I aminoacyl-tRNA synthetase family. TyrS type 1 subfamily. Homodimer.

The protein localises to the cytoplasm. It carries out the reaction tRNA(Tyr) + L-tyrosine + ATP = L-tyrosyl-tRNA(Tyr) + AMP + diphosphate + H(+). Catalyzes the attachment of tyrosine to tRNA(Tyr) in a two-step reaction: tyrosine is first activated by ATP to form Tyr-AMP and then transferred to the acceptor end of tRNA(Tyr). The polypeptide is Tyrosine--tRNA ligase (Yersinia enterocolitica serotype O:8 / biotype 1B (strain NCTC 13174 / 8081)).